Reading from the N-terminus, the 322-residue chain is RNA-binding motif protein, X-linked 2 (322 aa).

Lys-8 is covalently cross-linked (Glycyl lysine isopeptide (Lys-Gly) (interchain with G-Cter in SUMO2)). Positions 36–114 constitute an RRM domain; sequence AWIFLGGLPY…RTIRVDHVSN (79 aa). The segment at 134–322 is disordered; the sequence is KGCGARTPSP…SSNPSDRWRH (189 aa). Thr-140 is modified (phosphothreonine). Ser-149 carries the post-translational modification Phosphoserine. The segment covering 155–171 has biased composition (basic residues); sequence TKKHKKDKKEKKKKKKE. Ser-186 and Ser-188 each carry phosphoserine. The span at 195 to 223 shows a compositional bias: basic and acidic residues; sequence KEKDDTGPKKHSSKNSERAQKSEPREGQK. A Phosphoserine modification is found at Ser-232. The span at 240 to 274 shows a compositional bias: basic and acidic residues; sequence RELKKEKPKHEHKSSSRREAREEKTRIRDRGRSSD. A Glycyl lysine isopeptide (Lys-Gly) (interchain with G-Cter in SUMO2) cross-link involves residue Lys-243. Ser-272 bears the Phosphoserine mark. Positions 289 to 308 are enriched in basic residues; it reads YRSRSRSRDKSHRHKRARRS. Position 314 is a phosphoserine (Ser-314).

It belongs to the IST3 family. Part of the activated spliceosome B/catalytic step 1 spliceosome, one of the forms of the spliceosome which has a well-formed active site but still cannot catalyze the branching reaction and is composed of at least 52 proteins, the U2, U5 and U6 snRNAs and the pre-mRNA. Component of the minor spliceosome, which splices U12-type introns.

It localises to the nucleus. Involved in pre-mRNA splicing as component of the activated spliceosome. As a component of the minor spliceosome, involved in the splicing of U12-type introns in pre-mRNAs. The polypeptide is RNA-binding motif protein, X-linked 2 (RBMX2) (Homo sapiens (Human)).